A 435-amino-acid chain; its full sequence is GTPase Der (435 aa).

2 EngA-type G domains span residues 4 to 167 (PVVA…PAEK) and 175 to 350 (ISFS…DNQN). Residues 10–17 (GQPNVGKS), 57–61 (DTGGI), 119–122 (NKAD), 181–188 (GRPNVGKS), 228–232 (DTAGI), and 293–296 (NKWD) each bind GTP. The KH-like domain maps to 351 to 435 (QRIQSSVLND…PIKILPRKRK (85 aa)).

This sequence belongs to the TRAFAC class TrmE-Era-EngA-EngB-Septin-like GTPase superfamily. EngA (Der) GTPase family. As to quaternary structure, associates with the 50S ribosomal subunit.

In terms of biological role, GTPase that plays an essential role in the late steps of ribosome biogenesis. The sequence is that of GTPase Der from Lactobacillus acidophilus (strain ATCC 700396 / NCK56 / N2 / NCFM).